A 273-amino-acid polypeptide reads, in one-letter code: 4-hydroxy-tetrahydrodipicolinate reductase (273 aa).

Residues 11-16 (GATGKM) and 106-108 (GTT) contribute to the NAD(+) site. Histidine 162 functions as the Proton donor/acceptor in the catalytic mechanism. Histidine 163 lines the (S)-2,3,4,5-tetrahydrodipicolinate pocket. The active-site Proton donor is lysine 166. 172 to 173 (GT) provides a ligand contact to (S)-2,3,4,5-tetrahydrodipicolinate.

The protein belongs to the DapB family.

It localises to the cytoplasm. It carries out the reaction (S)-2,3,4,5-tetrahydrodipicolinate + NAD(+) + H2O = (2S,4S)-4-hydroxy-2,3,4,5-tetrahydrodipicolinate + NADH + H(+). It catalyses the reaction (S)-2,3,4,5-tetrahydrodipicolinate + NADP(+) + H2O = (2S,4S)-4-hydroxy-2,3,4,5-tetrahydrodipicolinate + NADPH + H(+). Its pathway is amino-acid biosynthesis; L-lysine biosynthesis via DAP pathway; (S)-tetrahydrodipicolinate from L-aspartate: step 4/4. Its function is as follows. Catalyzes the conversion of 4-hydroxy-tetrahydrodipicolinate (HTPA) to tetrahydrodipicolinate. This Synechococcus elongatus (strain ATCC 33912 / PCC 7942 / FACHB-805) (Anacystis nidulans R2) protein is 4-hydroxy-tetrahydrodipicolinate reductase.